Consider the following 314-residue polypeptide: MFQPAGHGQDWAMEGPRDGLKKERLVDDRHDSGLDSMKDEDYEQMVKELREIRLQPQEAPLAAEPWKQQLTEDGDSFLHLAIIHEEKTLTMEVIGQVKGDLAFLNFQNNLQQTPLHLAVITNQPGIAEALLKAGCDPELRDFRGNTPLHLACEQGCLASVAVLTQTCTPQHLHSVLQATNYNGHTCLHLASIHGYLGIVEHLVTLGADVNAQEPCNGRTALHLAVDLQNPDLVSLLLKCGADVNRVTYQGYSPYQLTWGRPSTRIQQQLGQLTLENLQTLPESEDEESYDTESEFTEDELPYDDCVFGGQRLTL.

The disordered stretch occupies residues 1-39; sequence MFQPAGHGQDWAMEGPRDGLKKERLVDDRHDSGLDSMKD. A compositionally biased stretch (basic and acidic residues) spans 15 to 39; that stretch reads GPRDGLKKERLVDDRHDSGLDSMKD. Lys21 is covalently cross-linked (Glycyl lysine isopeptide (Lys-Gly) (interchain with G-Cter in SUMO); alternate). Lys21 participates in a covalent cross-link: Glycyl lysine isopeptide (Lys-Gly) (interchain with G-Cter in ubiquitin); alternate. A Glycyl lysine isopeptide (Lys-Gly) (interchain with G-Cter in ubiquitin) cross-link involves residue Lys22. A Destruction motif motif is present at residues 30–36; that stretch reads HDSGLDS. Ser32 carries the post-translational modification Phosphoserine; by IKKA and IKKB. The residue at position 36 (Ser36) is a Phosphoserine; by IKKA, IKKB, IKKE and TBK1. Residue Tyr42 is modified to Phosphotyrosine; by Tyr-kinases. The Nuclear export signal signature appears at 45-54; the sequence is MVKELREIRL. Residues 110 to 120 carry the Nuclear import signal motif; that stretch reads LQQTPLHLAVI. ANK repeat units lie at residues 110 to 139, 143 to 172, 182 to 211, and 216 to 245; these read LQQT…DPEL, RGNT…PQHL, NGHT…DVNA, and NGRT…DVNR. (3S)-3-hydroxyasparagine; by HIF1AN is present on residues Asn210 and Asn244. Phosphoserine; by CK2 occurs at positions 283 and 288. Residue Thr291 is modified to Phosphothreonine; by CK2. Ser293 bears the Phosphoserine; by CK2 mark. Residue Thr296 is modified to Phosphothreonine.

Belongs to the NF-kappa-B inhibitor family. In terms of assembly, interacts with RELA; the interaction requires the nuclear import signal. Part of a 70-90 kDa complex at least consisting of CHUK, IKBKB, NFKBIA, RELA, ELP1 and MAP3K14. Interacts with NKIRAS1 and NKIRAS2. Interacts with RWDD3; the interaction enhances sumoylation. Interacts with PRMT2. Interacts with PRKACA in platelets; this interaction is disrupted by thrombin and collagen. Interacts with MEFV. Interacts with DDRGK1; positively regulates NFKBIA phosphorylation and degradation. Interacts with HNRNPA2B1; the interaction may be mediated by the RRM2 domain of HNRNPA2B1, and HNRNPA2B1 may interact simultaneously with FAM76B and either NFKBIA or NFKBIE to form a complex. Post-translationally, phosphorylated at Ser-32 and Ser-36 by IKKA/CHUK and IKKB/IKBKB; disables inhibition of NF-kappa-B DNA-binding activity. Phosphorylation at positions 32 and 36 is prerequisite to recognition by the SCF(FBXW11) and SCF(BTRC) complexes, leading to polyubiquitination and subsequent degradation. In terms of processing, polyubiquitinated at Lys-21 and/or Lys-22 following phosphorylation at Ser-32 and Ser-36. Monoubiquitinated at Lys-21 and/or Lys-22 by UBE2D3. Ubiquitin chain elongation is then performed by CDC34 in cooperation with the SCF(FBXW11) E3 ligase complex, building ubiquitin chains from the UBE2D3-primed NFKBIA-linked ubiquitin. The resulting polyubiquitination leads to protein degradation. Also ubiquitinated by the SCF(BTRC) complex following stimulus-dependent phosphorylation at Ser-32 and Ser-36. Deubiquitinated by USP38, leading to NF-kappa-B inhibition. Sumoylated; sumoylation requires the presence of the nuclear import signal. Sumoylation blocks ubiquitination and proteasome-mediated degradation of the protein thereby increasing the protein stability. Post-translationally, hydroxylated by HIF1AN.

The protein localises to the cytoplasm. It is found in the nucleus. Inhibits the activity of dimeric NF-kappa-B/REL complexes by trapping REL (RELA/p65 and NFKB1/p50) dimers in the cytoplasm by masking their nuclear localization signals. On cellular stimulation by immune and pro-inflammatory responses, becomes phosphorylated promoting ubiquitination and degradation, enabling the dimeric RELA to translocate to the nucleus and activate transcription. In Rattus norvegicus (Rat), this protein is NF-kappa-B inhibitor alpha (Nfkbia).